The following is a 253-amino-acid chain: Dihydroanticapsin 7-dehydrogenase (253 aa).

9-31 contributes to the NAD(+) binding site; it reads LITGGASGIGYAAVQAFLNQQAN. Substrate is bound at residue S139. The Proton acceptor role is filled by Y152.

The protein belongs to the short-chain dehydrogenases/reductases (SDR) family.

The catalysed reaction is L-dihydroanticapsin + NAD(+) = L-anticapsin + NADH + H(+). Its pathway is antibiotic biosynthesis; bacilysin biosynthesis. Its function is as follows. Part of the bacABCDEFG operon responsible for the biosynthesis of bacilysin, an irreversible inactivator of the glutaminase domain of glucosamine synthetase. Catalyzes the dehydrogenation of the C7-hydroxyl group in the 4S-tetrahydrotyrosine (4S-H4Tyr) to yield anticapsin (epoxycyclohexanonyl-Ala). This is Dihydroanticapsin 7-dehydrogenase from Bacillus subtilis.